The primary structure comprises 123 residues: Holo-[acyl-carrier-protein] synthase (123 aa).

Mg(2+) is bound by residues aspartate 8 and glutamate 55.

This sequence belongs to the P-Pant transferase superfamily. AcpS family. Mg(2+) is required as a cofactor.

Its subcellular location is the cytoplasm. It catalyses the reaction apo-[ACP] + CoA = holo-[ACP] + adenosine 3',5'-bisphosphate + H(+). Its function is as follows. Transfers the 4'-phosphopantetheine moiety from coenzyme A to a Ser of acyl-carrier-protein. The sequence is that of Holo-[acyl-carrier-protein] synthase from Solidesulfovibrio magneticus (strain ATCC 700980 / DSM 13731 / RS-1) (Desulfovibrio magneticus).